We begin with the raw amino-acid sequence, 46 residues long: GTP cyclohydrolase 1 (46 aa).

C7 provides a ligand contact to Zn(2+).

This sequence belongs to the GTP cyclohydrolase I family. In terms of assembly, homomer.

The catalysed reaction is GTP + H2O = 7,8-dihydroneopterin 3'-triphosphate + formate + H(+). The protein operates within cofactor biosynthesis; 7,8-dihydroneopterin triphosphate biosynthesis; 7,8-dihydroneopterin triphosphate from GTP: step 1/1. In Bacillus pumilus (Bacillus mesentericus), this protein is GTP cyclohydrolase 1 (folE).